The following is a 356-amino-acid chain: Thrombomodulin (356 aa).

Residues 1–296 (RGARGETEGR…SPAPAGPLHS (296 aa)) are Extracellular-facing. 2 consecutive EGF-like domains span residues 17 to 57 (GAWA…RSCG) and 60 to 98 (AEHPCHQLCEHFCHLHGLGNYTCICEAGYQLAADQHRCE). Intrachain disulfides connect Cys-21-Cys-32, Cys-28-Cys-41, Cys-43-Cys-56, Cys-64-Cys-72, Cys-68-Cys-82, Cys-84-Cys-97, Cys-103-Cys-114, Cys-110-Cys-123, Cys-125-Cys-136, Cys-143-Cys-152, Cys-148-Cys-162, Cys-164-Cys-178, Cys-182-Cys-191, Cys-187-Cys-199, Cys-201-Cys-213, Cys-219-Cys-228, Cys-224-Cys-237, and Cys-239-Cys-253. Positions 99-137 (DVDDCAQLPSPCPQRCVNTEGGFQCHCDTGYELVDGECV) constitute an EGF-like 3; calcium-binding domain. 2 EGF-like domains span residues 139–179 (PVDP…HKCQ) and 178–214 (CQMFCNQTSCPADCDPHYPTICRCPEGYIIDEGSTCT). The region spanning 215 to 254 (DINECDTNICPGQCHNLPGTYECICGPDSALSGQIGIDCD) is the EGF-like 6; calcium-binding domain. A disordered region spans residues 255–290 (PTQVNEERGTPEDYGGSGEPPVSPTPGATARPSPAP). An O-linked (Xyl...) (chondroitin sulfate) serine glycan is attached at Ser-271. Residues 297–320 (GVLVGISIASLSLVVALLALLCHL) form a helical membrane-spanning segment. Residues 321–356 (RKKQGASRGELEYKCGVPAKELMLQQVKTERTPQKL) are Cytoplasmic-facing.

As to quaternary structure, interacts with ITGAL, ITGAM and ITGB2. Interacts with thrombin/F2; this interaction switches the specificity of thrombin from a procoagulant to an anticoagulant and antifibrinolytic protease. Interacts with ANGP1 and ANGP2; these interactions significantly inhibit the generation of activated PC and TAFIa/CPB2 by the thrombin/thrombomodulin complex. Interacts with PF4; this interaction enhances generation of activated protein C. Interacts with HMGB1; this interaction inhibits HMGB1 inflammatory activity. In terms of tissue distribution, endothelial cells are unique in synthesizing thrombomodulin.

The protein resides in the membrane. Endothelial cell receptor that plays a critical role in regulating several physiological processes including hemostasis, coagulation, fibrinolysis, inflammation, and angiogenesis. Acts as a cofactor for thrombin activation of protein C/PROC on the surface of vascular endothelial cells leading to initiation of the activated protein C anticoagulant pathway. Also accelerates the activation of the plasma carboxypeptidase B2/CPB2, which catalyzes removal of C-terminal basic amino acids from its substrates including kinins or anaphylatoxins leading to fibrinolysis inhibition. Plays critical protective roles in changing the cleavage specificity of protease-activated receptor 1/PAR1, inhibiting endothelial cell permeability and inflammation. Suppresses inflammation distinctly from its anticoagulant cofactor activity by sequestering HMGB1 thereby preventing it from engaging cellular receptors such as RAGE and contributing to the inflammatory response. The sequence is that of Thrombomodulin (THBD) from Bos taurus (Bovine).